The primary structure comprises 468 residues: Acetyl-CoA decarbonylase/synthase complex subunit gamma 2 (468 aa).

Positions 1-60 (MKINSPLEAYKYLPQTNCGECGEATCMAFASKLIDRSGKPTQCPPLVKEKKFAKKLAELE) constitute a 4Fe-4S domain. [4Fe-4S] cluster contacts are provided by Cys18, Cys21, Cys26, and Cys43.

Heterodimer of delta and gamma chains. The ACDS complex is made up of alpha, epsilon, beta, gamma and delta chains with a probable stoichiometry of (alpha(2)epsilon(2))(4)-beta(8)-(gamma(1)delta(1))(8). The cofactor is corrinoid. Requires [4Fe-4S] cluster as cofactor.

It carries out the reaction 5,6,7,8-tetrahydrosarcinapterin + methyl-Co(III)-[corrinoid Fe-S protein] = 5-methyltetrahydrosarcinapterin + Co(I)-[corrinoid Fe-S protein] + H(+). Its pathway is one-carbon metabolism; methanogenesis from acetate. Part of a complex that catalyzes the reversible cleavage of acetyl-CoA, allowing growth on acetate as sole source of carbon and energy. This chain is Acetyl-CoA decarbonylase/synthase complex subunit gamma 2, found in Methanosarcina thermophila.